The following is a 178-amino-acid chain: ATP synthase subunit b, chloroplastic (178 aa).

A helical membrane pass occupies residues 34 to 50 (LAILTGGIFYLGSNALS).

It belongs to the ATPase B chain family. In terms of assembly, F-type ATPases have 2 components, F(1) - the catalytic core - and F(0) - the membrane proton channel. F(1) has five subunits: alpha(3), beta(3), gamma(1), delta(1), epsilon(1). F(0) has four main subunits: a(1), b(1), b'(1) and c(10-14). The alpha and beta chains form an alternating ring which encloses part of the gamma chain. F(1) is attached to F(0) by a central stalk formed by the gamma and epsilon chains, while a peripheral stalk is formed by the delta, b and b' chains.

The protein resides in the plastid. Its subcellular location is the chloroplast thylakoid membrane. Functionally, f(1)F(0) ATP synthase produces ATP from ADP in the presence of a proton or sodium gradient. F-type ATPases consist of two structural domains, F(1) containing the extramembraneous catalytic core and F(0) containing the membrane proton channel, linked together by a central stalk and a peripheral stalk. During catalysis, ATP synthesis in the catalytic domain of F(1) is coupled via a rotary mechanism of the central stalk subunits to proton translocation. In terms of biological role, component of the F(0) channel, it forms part of the peripheral stalk, linking F(1) to F(0). This is ATP synthase subunit b, chloroplastic from Ochrosphaera neapolitana.